Reading from the N-terminus, the 206-residue chain is LexA repressor (206 aa).

Positions 28–48 (RAEIARRLGFKSANAAEEHLK) form a DNA-binding region, H-T-H motif. Catalysis depends on for autocatalytic cleavage activity residues serine 123 and lysine 160.

The protein belongs to the peptidase S24 family. As to quaternary structure, homodimer.

It carries out the reaction Hydrolysis of Ala-|-Gly bond in repressor LexA.. Its function is as follows. Represses a number of genes involved in the response to DNA damage (SOS response), including recA and lexA. In the presence of single-stranded DNA, RecA interacts with LexA causing an autocatalytic cleavage which disrupts the DNA-binding part of LexA, leading to derepression of the SOS regulon and eventually DNA repair. This is LexA repressor from Shewanella piezotolerans (strain WP3 / JCM 13877).